Reading from the N-terminus, the 313-residue chain is Zinc transporter ZitB (313 aa).

Over 1 to 20 (MAHSHSHTSSHLPEDNNARR) the chain is Cytoplasmic. A helical membrane pass occupies residues 21-41 (LLYAFGVTAGFMLVEVVGGFL). At 42 to 47 (SGSLAL) the chain is on the periplasmic side. A helical transmembrane segment spans residues 48–68 (LADAGHMLTDTAALLFALLAV). The Cytoplasmic portion of the chain corresponds to 69–89 (QFSRRPPTIRHTFGWLRLTTL). Residues 90–110 (AAFVNAIALVVITILIVWEAI) form a helical membrane-spanning segment. At 111–121 (ERFRTPRPVEG) the chain is on the periplasmic side. A helical transmembrane segment spans residues 122 to 142 (GMMMAIAVAGLLANILSFWLL). The Cytoplasmic segment spans residues 143-159 (HHGSEEKNLNVRAAALH). A helical transmembrane segment spans residues 160-180 (VLGDLLGSVGAIIAALIIIWT). Glycine 181 is a topological domain (periplasmic). A helical transmembrane segment spans residues 182–202 (WTPADPILSILVSLLVLRSAW). Residues 203-313 (RLLKDSVNEL…GVSGHSHHHH (111 aa)) lie on the Cytoplasmic side of the membrane.

This sequence belongs to the cation diffusion facilitator (CDF) transporter (TC 2.A.4) family. SLC30A subfamily.

The protein resides in the cell inner membrane. Involved in zinc efflux across the cytoplasmic membrane, thus reducing zinc accumulation in the cytoplasm and rendering bacteria more resistant to zinc. It may contribute to zinc homeostasis at low concentrations of zinc. This chain is Zinc transporter ZitB (zitB), found in Shigella flexneri.